The primary structure comprises 126 residues: Methylglyoxal synthase (126 aa).

Residues 1 to 126 enclose the MGS-like domain; that stretch reads MADRKCLALI…AEQLIDFRRN (126 aa). Substrate-binding positions include histidine 12, lysine 16, 38-41, and 59-60; these read TGTT and SG. Aspartate 65 functions as the Proton donor/acceptor in the catalytic mechanism. Residue histidine 92 participates in substrate binding.

Belongs to the methylglyoxal synthase family.

The catalysed reaction is dihydroxyacetone phosphate = methylglyoxal + phosphate. Catalyzes the formation of methylglyoxal from dihydroxyacetone phosphate. The chain is Methylglyoxal synthase from Rhizobium meliloti (strain 1021) (Ensifer meliloti).